The primary structure comprises 449 residues: Ribulose bisphosphate carboxylase large chain (449 aa).

Lysine 7 bears the N6,N6,N6-trimethyllysine mark. The substrate site is built by asparagine 116 and threonine 166. Lysine 168 serves as the catalytic Proton acceptor. Lysine 170 lines the substrate pocket. 3 residues coordinate Mg(2+): lysine 194, aspartate 196, and glutamate 197. An N6-carboxylysine modification is found at lysine 194. The Proton acceptor role is filled by histidine 287. Arginine 288, histidine 320, and serine 372 together coordinate substrate.

Belongs to the RuBisCO large chain family. Type I subfamily. As to quaternary structure, heterohexadecamer of 8 large chains and 8 small chains; disulfide-linked. The disulfide link is formed within the large subunit homodimers. Mg(2+) serves as cofactor. The disulfide bond which can form in the large chain dimeric partners within the hexadecamer appears to be associated with oxidative stress and protein turnover.

The protein localises to the plastid. It localises to the chloroplast. It catalyses the reaction 2 (2R)-3-phosphoglycerate + 2 H(+) = D-ribulose 1,5-bisphosphate + CO2 + H2O. The catalysed reaction is D-ribulose 1,5-bisphosphate + O2 = 2-phosphoglycolate + (2R)-3-phosphoglycerate + 2 H(+). Functionally, ruBisCO catalyzes two reactions: the carboxylation of D-ribulose 1,5-bisphosphate, the primary event in carbon dioxide fixation, as well as the oxidative fragmentation of the pentose substrate in the photorespiration process. Both reactions occur simultaneously and in competition at the same active site. The sequence is that of Ribulose bisphosphate carboxylase large chain from Aspidistra elatior (Cast-iron plant).